The chain runs to 301 residues: D-alanine--D-alanine ligase (301 aa).

Residues 99–294 form the ATP-grasp domain; the sequence is KCILKAANIR…FPELIDMIID (196 aa). ATP is bound at residue 126–181; that stretch reads IEKMGYPVVVKPTHGGSSVATFIIKEEKDIKDAVIEGFKWDSEVIIEKFIKGDEIT. Mg(2+)-binding residues include Asp248, Glu261, and Asn263.

It belongs to the D-alanine--D-alanine ligase family. The cofactor is Mg(2+). Mn(2+) is required as a cofactor.

Its subcellular location is the cytoplasm. It catalyses the reaction 2 D-alanine + ATP = D-alanyl-D-alanine + ADP + phosphate + H(+). Its pathway is cell wall biogenesis; peptidoglycan biosynthesis. Functionally, cell wall formation. This Clostridium botulinum (strain Alaska E43 / Type E3) protein is D-alanine--D-alanine ligase.